The sequence spans 276 residues: Neuroendocrine protein 7B2 (276 aa).

Cysteines 155 and 168 form a disulfide.

Belongs to the 7B2 family. As to quaternary structure, interacts with amon/PC2 early in the secretory pathway. Dissociation occurs at later stages.

The protein localises to the secreted. In terms of biological role, acts as a molecular chaperone for neuroendocrine convertase amon/PC2, preventing its premature activation in the regulated secretory pathway. Binds to inactive amon in the endoplasmic reticulum and facilitates its transport from there to later compartments of the secretory pathway where it is proteolytically matured and activated. Also required for cleavage of amon. This Drosophila melanogaster (Fruit fly) protein is Neuroendocrine protein 7B2.